The sequence spans 266 residues: uncharacterized protein (266 aa).

Residues 12 to 28 (ILAAGLAIGCAGGYYAY) traverse the membrane as a helical segment. Residues 40–140 (EIYAPFTVNK…RGPFKTTKLD (101 aa)) enclose the FAD-binding FR-type domain.

This sequence belongs to the flavoprotein pyridine nucleotide cytochrome reductase family. It depends on FAD as a cofactor.

The protein localises to the mitochondrion outer membrane. This is an uncharacterized protein from Schizosaccharomyces pombe (strain 972 / ATCC 24843) (Fission yeast).